A 152-amino-acid chain; its full sequence is SXP/RAL-2 family protein Ani s 5 (152 aa).

A signal peptide spans 1–18 (MKTLIVAALFCTIGMALA). Necessary for IgE-binding regions lie at residues 25-42 (PPFL…FFEL), 49-54 (KTDPEI), 58-66 (LDAWVDTLG), and 103-120 (KKAD…SLNG). IgG4-binding regions lie at residues 49 to 68 (KTDP…LGGD) and 118 to 137 (LNGI…LPQS). Residues 127-146 (IQAIYKTLPQSVKDELEKGI) form an igE-binding and IgG4-binding region.

It belongs to the SXP/RAL-2 family. As to quaternary structure, monomer. Excretory gland, ventriculus, and the luminal epithelium of the intestine of the larvae.

The protein localises to the secreted. This Anisakis simplex (Herring worm) protein is SXP/RAL-2 family protein Ani s 5.